The following is a 291-amino-acid chain: Nucleoid occlusion protein (291 aa).

Residues 155–174 (EALAQRLGKGQSTVANKLRL) constitute a DNA-binding region (H-T-H motif).

This sequence belongs to the ParB family.

The protein resides in the cytoplasm. The protein localises to the nucleoid. In terms of biological role, effects nucleoid occlusion by binding relatively nonspecifically to DNA and preventing the assembly of the division machinery in the vicinity of the nucleoid, especially under conditions that disturb the cell cycle. It helps to coordinate cell division and chromosome segregation by preventing the formation of the Z ring through the nucleoid, which would cause chromosome breakage. The polypeptide is Nucleoid occlusion protein (Bacillus pumilus (strain SAFR-032)).